The primary structure comprises 345 residues: S-adenosylmethionine:tRNA ribosyltransferase-isomerase (345 aa).

The protein belongs to the QueA family. As to quaternary structure, monomer.

It is found in the cytoplasm. It catalyses the reaction 7-aminomethyl-7-carbaguanosine(34) in tRNA + S-adenosyl-L-methionine = epoxyqueuosine(34) in tRNA + adenine + L-methionine + 2 H(+). It participates in tRNA modification; tRNA-queuosine biosynthesis. In terms of biological role, transfers and isomerizes the ribose moiety from AdoMet to the 7-aminomethyl group of 7-deazaguanine (preQ1-tRNA) to give epoxyqueuosine (oQ-tRNA). The chain is S-adenosylmethionine:tRNA ribosyltransferase-isomerase from Lactococcus lactis subsp. lactis (strain IL1403) (Streptococcus lactis).